The primary structure comprises 503 residues: Potassium voltage-gated channel subfamily V member 1 (503 aa).

Over 1–213 the chain is Cytoplasmic; that stretch reads MELLPPRGRA…EKPGSCTAAR (213 aa). The chain crosses the membrane as a helical span at residues 214–234; that stretch reads IFGVISIIFVAVSIVNMALMS. Over 235–246 the chain is Extracellular; the sequence is AELSWLDPQLLE. Residues 247-267 traverse the membrane as a helical segment; the sequence is ILEYVCISWFTGEFVLRFLCV. The Cytoplasmic segment spans residues 268–279; sequence RDRCRFLRKVPN. The helical transmembrane segment at 280–300 threads the bilayer; sequence IIDLLAILPFYITLLVESLSG. Residues 301-312 lie on the Extracellular side of the membrane; it reads SQTTQELENVGR. Residues 313-334 traverse the membrane as a helical; Voltage-sensor segment; that stretch reads IVQVLRLLRALRMLKLGRHSTG. Over 335 to 348 the chain is Cytoplasmic; sequence LRSLGMTITQCYEE. A helical membrane pass occupies residues 349–369; sequence VGLLLLFLSVGISIFSTVEYF. Residues 395–400 carry the Selectivity filter motif; the sequence is TVGYGD. Residues 410 to 430 traverse the membrane as a helical segment; that stretch reads IVAFMCILSGILVLALPIAII. Topologically, residues 431–503 are cytoplasmic; sequence NDRFSACYFT…RSSGGDDFWF (73 aa).

The protein belongs to the potassium channel family. V (TC 1.A.1.2) subfamily. Kv8.1/KCNV1 sub-subfamily. As to quaternary structure, heteromultimer with KCNB1 and KCNB2. Interacts with KCNC4 and KCND1.

It localises to the cell membrane. Functionally, potassium channel subunit that does not form functional channels by itself. Modulates KCNB1 and KCNB2 channel activity by shifting the threshold for inactivation to more negative values and by slowing the rate of inactivation. Can down-regulate the channel activity of KCNB1, KCNB2, KCNC4 and KCND1, possibly by trapping them in intracellular membranes. This chain is Potassium voltage-gated channel subfamily V member 1 (KCNV1), found in Bos taurus (Bovine).